The following is a 535-amino-acid chain: Bifunctional purine biosynthesis protein PurH (535 aa).

One can recognise an MGS-like domain in the interval 6–151 (TRLPIRRALI…KNHKDVAIVV (146 aa)).

It belongs to the PurH family.

The enzyme catalyses (6R)-10-formyltetrahydrofolate + 5-amino-1-(5-phospho-beta-D-ribosyl)imidazole-4-carboxamide = 5-formamido-1-(5-phospho-D-ribosyl)imidazole-4-carboxamide + (6S)-5,6,7,8-tetrahydrofolate. It catalyses the reaction IMP + H2O = 5-formamido-1-(5-phospho-D-ribosyl)imidazole-4-carboxamide. Its pathway is purine metabolism; IMP biosynthesis via de novo pathway; 5-formamido-1-(5-phospho-D-ribosyl)imidazole-4-carboxamide from 5-amino-1-(5-phospho-D-ribosyl)imidazole-4-carboxamide (10-formyl THF route): step 1/1. It participates in purine metabolism; IMP biosynthesis via de novo pathway; IMP from 5-formamido-1-(5-phospho-D-ribosyl)imidazole-4-carboxamide: step 1/1. The chain is Bifunctional purine biosynthesis protein PurH from Pseudomonas fluorescens (strain SBW25).